We begin with the raw amino-acid sequence, 188 residues long: MGVNKALIKQAVKQILVAIGEDPEREGLRRTPDRVANMLEELTNGREENVQYTLFEGSSNMVIVAGIRFSTLCEHHLLPMLGVTHVAYIPSDKVIGVSKIPRIVVKYSRMLQLQERLTRQIMNEVSSATGSGDVMVLTEAYHTCMMIRGVRSASPLVSMAYKGKFNDSSLRLEFLEYIRPFRLNKFLT.

Zn(2+) is bound by residues Cys73, His76, and Cys144.

Belongs to the GTP cyclohydrolase I family. As to quaternary structure, homomer.

It catalyses the reaction GTP + H2O = 7,8-dihydroneopterin 3'-triphosphate + formate + H(+). It functions in the pathway cofactor biosynthesis; 7,8-dihydroneopterin triphosphate biosynthesis; 7,8-dihydroneopterin triphosphate from GTP: step 1/1. This is GTP cyclohydrolase 1 from Caldivirga maquilingensis (strain ATCC 700844 / DSM 13496 / JCM 10307 / IC-167).